A 131-amino-acid polypeptide reads, in one-letter code: Small ribosomal subunit protein uS11 (131 aa).

Basic residues predominate over residues 1-15; the sequence is MAAQKVKKTRRRKER. The interval 1-23 is disordered; the sequence is MAAQKVKKTRRRKERKNVEHGAA.

The protein belongs to the universal ribosomal protein uS11 family. In terms of assembly, part of the 30S ribosomal subunit. Interacts with proteins S7 and S18. Binds to IF-3.

Its function is as follows. Located on the platform of the 30S subunit, it bridges several disparate RNA helices of the 16S rRNA. Forms part of the Shine-Dalgarno cleft in the 70S ribosome. This is Small ribosomal subunit protein uS11 from Clostridium perfringens (strain 13 / Type A).